The sequence spans 216 residues: Large ribosomal subunit protein uL4 (216 aa).

Residues 51-78 form a disordered region; sequence KGRSEVHGSNTKPYKQKGTGRARRGDKK. Basic residues predominate over residues 64 to 76; that stretch reads YKQKGTGRARRGD.

It belongs to the universal ribosomal protein uL4 family. As to quaternary structure, part of the 50S ribosomal subunit.

In terms of biological role, one of the primary rRNA binding proteins, this protein initially binds near the 5'-end of the 23S rRNA. It is important during the early stages of 50S assembly. It makes multiple contacts with different domains of the 23S rRNA in the assembled 50S subunit and ribosome. Its function is as follows. Forms part of the polypeptide exit tunnel. The chain is Large ribosomal subunit protein uL4 from Treponema pallidum (strain Nichols).